Consider the following 129-residue polypeptide: HTH-type transcriptional regulator HmrR (129 aa).

The region spanning 1-68 (MNIGEASERS…VEECRQLLAL (68 aa)) is the HTH merR-type domain. The segment at residues 4–23 (GEASERSGLPSKTIRYYEDI) is a DNA-binding region (H-T-H motif).

Homodimer.

The protein resides in the cytoplasm. Regulates the transcription of actP. It detects cytoplasmic copper stress and activates transcription in response to increasing copper concentrations. In the absence of copper, it negatively regulates the transcription of actP. The chain is HTH-type transcriptional regulator HmrR (hmrR) from Rhizobium leguminosarum bv. viciae.